We begin with the raw amino-acid sequence, 270 residues long: uncharacterized protein (270 aa).

It is found in the virion. This is an uncharacterized protein from Acanthamoeba polyphaga (Amoeba).